Consider the following 135-residue polypeptide: Large ribosomal subunit protein uL16c (135 aa).

Belongs to the universal ribosomal protein uL16 family. In terms of assembly, part of the 50S ribosomal subunit.

It localises to the plastid. It is found in the chloroplast. This chain is Large ribosomal subunit protein uL16c, found in Populus alba (White poplar).